The primary structure comprises 418 residues: NADH-quinone oxidoreductase subunit D (418 aa).

Belongs to the complex I 49 kDa subunit family. In terms of assembly, NDH-1 is composed of 14 different subunits. Subunits NuoB, C, D, E, F, and G constitute the peripheral sector of the complex.

The protein resides in the cell inner membrane. It catalyses the reaction a quinone + NADH + 5 H(+)(in) = a quinol + NAD(+) + 4 H(+)(out). Functionally, NDH-1 shuttles electrons from NADH, via FMN and iron-sulfur (Fe-S) centers, to quinones in the respiratory chain. The immediate electron acceptor for the enzyme in this species is believed to be ubiquinone. Couples the redox reaction to proton translocation (for every two electrons transferred, four hydrogen ions are translocated across the cytoplasmic membrane), and thus conserves the redox energy in a proton gradient. The sequence is that of NADH-quinone oxidoreductase subunit D from Neisseria meningitidis serogroup C (strain 053442).